We begin with the raw amino-acid sequence, 312 residues long: ADP-L-glycero-D-manno-heptose-6-epimerase (312 aa).

NADP(+) contacts are provided by residues 10-11 (FI), 31-32 (DN), K38, K53, 75-79 (EGACS), and N92. The active-site Proton acceptor is Y140. Residue K144 participates in NADP(+) binding. Position 169 (N169) interacts with substrate. NADP(+) is bound by residues V170 and K178. Residue K178 is the Proton acceptor of the active site. Substrate contacts are provided by residues S180, H187, 201–204 (FAGS), R209, and Y274.

Belongs to the NAD(P)-dependent epimerase/dehydratase family. HldD subfamily. As to quaternary structure, homopentamer. NADP(+) serves as cofactor.

The catalysed reaction is ADP-D-glycero-beta-D-manno-heptose = ADP-L-glycero-beta-D-manno-heptose. It functions in the pathway nucleotide-sugar biosynthesis; ADP-L-glycero-beta-D-manno-heptose biosynthesis; ADP-L-glycero-beta-D-manno-heptose from D-glycero-beta-D-manno-heptose 7-phosphate: step 4/4. The protein operates within bacterial outer membrane biogenesis; LPS core biosynthesis. Functionally, catalyzes the interconversion between ADP-D-glycero-beta-D-manno-heptose and ADP-L-glycero-beta-D-manno-heptose via an epimerization at carbon 6 of the heptose. This chain is ADP-L-glycero-D-manno-heptose-6-epimerase, found in Photorhabdus laumondii subsp. laumondii (strain DSM 15139 / CIP 105565 / TT01) (Photorhabdus luminescens subsp. laumondii).